The following is a 67-amino-acid chain: Putative cytosolic sulfotransferase 2 (67 aa).

Residue 31–33 participates in 3'-phosphoadenylyl sulfate binding; that stretch reads RDG.

It belongs to the sulfotransferase 1 family.

It is found in the cytoplasm. Sulfotransferase that utilizes 3'-phospho-5'-adenylyl sulfate (PAPS) as sulfonate donor. This chain is Putative cytosolic sulfotransferase 2 (SOT2), found in Arabidopsis thaliana (Mouse-ear cress).